A 317-amino-acid chain; its full sequence is Melanocyte-stimulating hormone receptor (317 aa).

Residues 1–37 are Extracellular-facing; that stretch reads MPLQGPQRRLLGSLNSTLPATPYLGLTTNQTEPPCLE. A glycan (N-linked (GlcNAc...) asparagine) is linked at Asn29. Residues 38-63 traverse the membrane as a helical segment; that stretch reads VSIPDGLFLSLGLVSLVENVLVVTAI. Topologically, residues 64–72 are cytoplasmic; that stretch reads AKNRNLHSP. A helical membrane pass occupies residues 73 to 93; it reads MYYFICCLAVSDLLVSMSNVL. Topologically, residues 94–118 are extracellular; the sequence is EMAILLLLEAGVLATQASVLQQLDN. A helical transmembrane segment spans residues 119–140; it reads IIDVLICGSMVSSLCFLGSIAV. The Cytoplasmic portion of the chain corresponds to 141-163; that stretch reads DRYISIFYALRYHSIMMLPRVWR. A helical transmembrane segment spans residues 164–183; the sequence is AIVAIWVVSVLSSTLFIAYY. Residues 184 to 191 lie on the Extracellular side of the membrane; sequence NHTAVLLC. The helical transmembrane segment at 192–211 threads the bilayer; the sequence is LVTFFVAMLVLMAVLYVHML. At 212-240 the chain is on the cytoplasmic side; the sequence is ARACQHARGIARLHKRQHPIHQGFGLKGA. A helical transmembrane segment spans residues 241-266; it reads ATLTILLGVFFLCWGPFFLHLSLLIL. Topologically, residues 267–279 are extracellular; it reads CPQHPTCGCVFKN. Residues 280–300 form a helical membrane-spanning segment; the sequence is FKLFLTLILCSAIVDPLIYAF. At 301–317 the chain is on the cytoplasmic side; the sequence is RSQELRKTLQEVLLCSW. Cys315 carries the S-palmitoyl cysteine lipid modification.

The protein belongs to the G-protein coupled receptor 1 family. In terms of assembly, interacts with MGRN1, but does not undergo MGRN1-mediated ubiquitination; this interaction competes with GNAS-binding and thus inhibits agonist-induced cAMP production. Interacts with OPN3; the interaction results in a decrease in MC1R-mediated cAMP signaling and ultimately a decrease in melanin production in melanocytes.

It is found in the cell membrane. In terms of biological role, receptor for MSH (alpha, beta and gamma) and ACTH. The activity of this receptor is mediated by G proteins which activate adenylate cyclase. Mediates melanogenesis, the production of eumelanin (black/brown) and phaeomelanin (red/yellow), via regulation of cAMP signaling in melanocytes. This chain is Melanocyte-stimulating hormone receptor (MC1R), found in Equus caballus (Horse).